Reading from the N-terminus, the 284-residue chain is Pseudouridine-5'-phosphate glycosidase (284 aa).

E17 (proton donor) is an active-site residue. K77 and V97 together coordinate substrate. D126 lines the Mn(2+) pocket. 128-130 (SQD) is a binding site for substrate. K147 functions as the Nucleophile in the catalytic mechanism.

It belongs to the pseudouridine-5'-phosphate glycosidase family. In terms of assembly, homotrimer. Mn(2+) is required as a cofactor.

The catalysed reaction is D-ribose 5-phosphate + uracil = psi-UMP + H2O. In terms of biological role, catalyzes the reversible cleavage of pseudouridine 5'-phosphate (PsiMP) to ribose 5-phosphate and uracil. Functions biologically in the cleavage direction, as part of a pseudouridine degradation pathway. The sequence is that of Pseudouridine-5'-phosphate glycosidase from Thermotoga petrophila (strain ATCC BAA-488 / DSM 13995 / JCM 10881 / RKU-1).